Here is a 533-residue protein sequence, read N- to C-terminus: Beta-1,4 N-acetylgalactosaminyltransferase 1 (533 aa).

At methionine 1–alanine 7 the chain is on the cytoplasmic side. The helical; Signal-anchor for type II membrane protein transmembrane segment at leucine 8–serine 25 threads the bilayer. Residues serine 26–glutamate 533 lie on the Lumenal side of the membrane. N-linked (GlcNAc...) asparagine glycans are attached at residues asparagine 79, asparagine 179, and asparagine 274. Cysteine 429 and cysteine 476 are disulfide-bonded.

This sequence belongs to the glycosyltransferase 2 family. Homodimer; disulfide-linked. In terms of tissue distribution, most abundant in brain, liver, lung, spleen and testis.

The protein localises to the golgi apparatus membrane. The catalysed reaction is a ganglioside GM3 (d18:1(4E)) + UDP-N-acetyl-alpha-D-galactosamine = a ganglioside GM2 (d18:1(4E)) + UDP + H(+). The enzyme catalyses a ganglioside GD3 (d18:1(4E)) + UDP-N-acetyl-alpha-D-galactosamine = a ganglioside GD2 (d18:1(4E)) + UDP + H(+). It carries out the reaction a ganglioside GM3 + UDP-N-acetyl-alpha-D-galactosamine = a ganglioside GM2 + UDP + H(+). It catalyses the reaction a ganglioside GD3 + UDP-N-acetyl-alpha-D-galactosamine = a ganglioside GD2 + UDP + H(+). The catalysed reaction is a ganglioside GD1a + UDP-N-acetyl-alpha-D-galactosamine = a ganglioside GalNAc-GD1a + UDP + H(+). The enzyme catalyses a ganglioside GT3 (d18:1(4E)) + UDP-N-acetyl-alpha-D-galactosamine = a ganglioside GT2 (d18:1(4E)) + UDP + H(+). It carries out the reaction a beta-D-Gal-(1-&gt;4)-beta-D-Glc-(1&lt;-&gt;1)-Cer(d18:1(4E)) + UDP-N-acetyl-alpha-D-galactosamine = a ganglioside GA2 (d18:1(4E)) + UDP + H(+). It catalyses the reaction a neolactoside IV(3)-alpha-NeuGc-nLc4Cer + UDP-N-acetyl-alpha-D-galactosamine = a neolactoside IV(4)-beta-GalNAc-IV(3)-alpha-NeuGc-nLc4Cer + UDP + H(+). Its pathway is sphingolipid metabolism. Its function is as follows. Involved in the biosynthesis of gangliosides GM2, GD2 and GA2. Functionally, involved in the biosynthesis of gangliosides GM2, GD2, GT2 and GA2 from GM3, GD3, GT3 and GA3, respectively. This chain is Beta-1,4 N-acetylgalactosaminyltransferase 1, found in Mus musculus (Mouse).